The primary structure comprises 362 residues: Acetylglutamate kinase (362 aa).

The segment covering 1 to 11 has biased composition (pro residues); the sequence is MNAPTRTPPPS. Residues 1–42 form a disordered region; the sequence is MNAPTRTPPPSNGGHGSTGSTGSTGDAAPGGGTGRGPAATAR. Substrate is bound by residues 106–107, arginine 128, and asparagine 227; that span reads GG. The segment at 329 to 362 is disordered; the sequence is MAESGTSPEPGTPPAPAARPAGIVPAGEPTGGTP. Over residues 346–355 the composition is skewed to low complexity; sequence ARPAGIVPAG.

This sequence belongs to the acetylglutamate kinase family. ArgB subfamily.

It localises to the cytoplasm. It catalyses the reaction N-acetyl-L-glutamate + ATP = N-acetyl-L-glutamyl 5-phosphate + ADP. Its pathway is amino-acid biosynthesis; L-arginine biosynthesis; N(2)-acetyl-L-ornithine from L-glutamate: step 2/4. In terms of biological role, catalyzes the ATP-dependent phosphorylation of N-acetyl-L-glutamate. The polypeptide is Acetylglutamate kinase (Frankia casuarinae (strain DSM 45818 / CECT 9043 / HFP020203 / CcI3)).